Here is a 444-residue protein sequence, read N- to C-terminus: Ribulose bisphosphate carboxylase large chain (444 aa).

The residue at position 7 (Lys-7) is an N6,N6,N6-trimethyllysine. Positions 116 and 166 each coordinate substrate. Lys-168 functions as the Proton acceptor in the catalytic mechanism. Lys-170 contributes to the substrate binding site. Lys-194, Asp-196, and Glu-197 together coordinate Mg(2+). At Lys-194 the chain carries N6-carboxylysine. Residue His-287 is the Proton acceptor of the active site. 3 residues coordinate substrate: Arg-288, His-320, and Ser-372.

This sequence belongs to the RuBisCO large chain family. Type I subfamily. As to quaternary structure, heterohexadecamer of 8 large chains and 8 small chains; disulfide-linked. The disulfide link is formed within the large subunit homodimers. The cofactor is Mg(2+). The disulfide bond which can form in the large chain dimeric partners within the hexadecamer appears to be associated with oxidative stress and protein turnover.

It is found in the plastid. The protein localises to the chloroplast. The enzyme catalyses 2 (2R)-3-phosphoglycerate + 2 H(+) = D-ribulose 1,5-bisphosphate + CO2 + H2O. It catalyses the reaction D-ribulose 1,5-bisphosphate + O2 = 2-phosphoglycolate + (2R)-3-phosphoglycerate + 2 H(+). In terms of biological role, ruBisCO catalyzes two reactions: the carboxylation of D-ribulose 1,5-bisphosphate, the primary event in carbon dioxide fixation, as well as the oxidative fragmentation of the pentose substrate in the photorespiration process. Both reactions occur simultaneously and in competition at the same active site. In Watsonia angusta, this protein is Ribulose bisphosphate carboxylase large chain.